A 124-amino-acid polypeptide reads, in one-letter code: Small ribosomal subunit protein uS12 (124 aa).

Asp89 carries the 3-methylthioaspartic acid modification.

The protein belongs to the universal ribosomal protein uS12 family. Part of the 30S ribosomal subunit. Contacts proteins S8 and S17. May interact with IF1 in the 30S initiation complex.

Functionally, with S4 and S5 plays an important role in translational accuracy. Its function is as follows. Interacts with and stabilizes bases of the 16S rRNA that are involved in tRNA selection in the A site and with the mRNA backbone. Located at the interface of the 30S and 50S subunits, it traverses the body of the 30S subunit contacting proteins on the other side and probably holding the rRNA structure together. The combined cluster of proteins S8, S12 and S17 appears to hold together the shoulder and platform of the 30S subunit. This is Small ribosomal subunit protein uS12 from Psychrobacter arcticus (strain DSM 17307 / VKM B-2377 / 273-4).